We begin with the raw amino-acid sequence, 306 residues long: Probable thioesterase atnL (306 aa).

It belongs to the lcsJ thioesterase family.

Part of the gene cluster that mediates the biosynthesis of aspercryptins, linear lipopeptides built from six amino acids including 2 highly unusual and nonproteogenic amino acids, 2-amino-octanoic acid (2aoa) and 2-amino-dodecanol (2adol). The core structure of aspercryptins is as follows: Ser/Ala-Thr-Ile/Val-2aoa-Asn-2adol. The first step of aspercryptin biosynthesis is the generation of the fatty acid precursors, octanoic and dodecanoic acids, by the FAS subunits atnF and atnM. The fatty acid precursors are likely transformed into the corresponding alpha-amino fatty acids in three steps. First, they are hydroxylated by the cytochrome P450 monooxygenase atnE, then oxidized to the corresponding alpha-keto acids by the NAD(P)-dependent oxidoreductase atnD, and finally converted to the alpha-amino fatty acids by the PLP-dependent aminotransferases atnH or atnJ. the alpha-amino fatty acids, 2-amino-octanoic and 2-amino-dodecanoic acids, are recognized, activated, and covalently tethered to the NRPS atnA by its fourth and sixth adenylation domains. The second module of atnA is the Thr module and contains an epimerase (E) domain responsible for the epimerization of Thr to D-allo-Thr. Additionally, despite atnA having only one epimerase domain, the first amino acid of aspercryptin A1 is D-Ser, suggesting that serine is either loaded directly as D-Ser on the first module or that the epimerase domain in the threonine module epimerizes both L-Ser and L-Thr. After condensation of the hexapeptide of aspercryptin, the C-terminal reductase (TE) domain might be involved in the reductive release and production of the aldehyde hexapeptide. Further reduction would generate aspercryptins. The variety of aspercryptins produced reflects the flexibility of the atnA NRPS, allowing incorporation of alanine instead of serine, valine for isoleucine, and a C10 fatty amino alcohol instead of the C12 version. AtnB seems to be involved in the selectivity for Ile versus Val by the third module. Moreover, type B, C and D aspercryptins have an additional N-terminal cichorine, acetyl and propionyl group respectively. This chain is Probable thioesterase atnL, found in Emericella nidulans (strain FGSC A4 / ATCC 38163 / CBS 112.46 / NRRL 194 / M139) (Aspergillus nidulans).